The following is a 275-amino-acid chain: 3-methyl-2-oxobutanoate hydroxymethyltransferase (275 aa).

Residues Asp51 and Asp90 each contribute to the Mg(2+) site. 3-methyl-2-oxobutanoate contacts are provided by residues 51–52 (DS), Asp90, and Lys120. Residue Glu122 coordinates Mg(2+). Glu189 (proton acceptor) is an active-site residue.

This sequence belongs to the PanB family. Homodecamer; pentamer of dimers. Mg(2+) serves as cofactor.

The protein localises to the cytoplasm. It catalyses the reaction 3-methyl-2-oxobutanoate + (6R)-5,10-methylene-5,6,7,8-tetrahydrofolate + H2O = 2-dehydropantoate + (6S)-5,6,7,8-tetrahydrofolate. It participates in cofactor biosynthesis; (R)-pantothenate biosynthesis; (R)-pantoate from 3-methyl-2-oxobutanoate: step 1/2. Functionally, catalyzes the reversible reaction in which hydroxymethyl group from 5,10-methylenetetrahydrofolate is transferred onto alpha-ketoisovalerate to form ketopantoate. The protein is 3-methyl-2-oxobutanoate hydroxymethyltransferase of Caulobacter vibrioides (strain ATCC 19089 / CIP 103742 / CB 15) (Caulobacter crescentus).